Reading from the N-terminus, the 145-residue chain is Ribonuclease H (145 aa).

An RNase H type-1 domain is found at 2–143 (SKKEVIIYTD…ADSLARKAII (142 aa)). Mg(2+) is bound by residues Asp-11, Glu-49, Asp-71, and Asp-135.

Belongs to the RNase H family. As to quaternary structure, monomer. Requires Mg(2+) as cofactor.

It localises to the cytoplasm. It catalyses the reaction Endonucleolytic cleavage to 5'-phosphomonoester.. Functionally, endonuclease that specifically degrades the RNA of RNA-DNA hybrids. This is Ribonuclease H from Wolbachia pipientis wMel.